A 679-amino-acid polypeptide reads, in one-letter code: Protein asunder (679 aa).

Residues 519 to 541 (RLKVNKTKDQYRLFYRELEQLIQ) adopt a coiled-coil conformation. Positions 564 to 610 (GDASNKSDPSAAHLRSYTESPLSPERLEPTNSVNSSSSSILKASKRR) are disordered. The Nuclear localization signal (NLS) motif lies at 604 to 610 (LKASKRR).

The protein belongs to the Integrator subunit 13 family. As to quaternary structure, belongs to the multiprotein complex Integrator, at least composed of IntS1, IntS2, IntS3, IntS4, omd/IntS5, IntS6, defl/IntS7, IntS8, IntS9, IntS10, IntS11, IntS12, asun/IntS13, IntS14 and IntS15. The core complex associates with protein phosphatase 2A subunits mts/PP2A and Pp2A-29B, to form the Integrator-PP2A (INTAC) complex. In terms of processing, phosphorylated.

The protein resides in the nucleus. Its subcellular location is the cytoplasm. It is found in the perinuclear region. In terms of biological role, component of the integrator complex, a multiprotein complex that terminates RNA polymerase II (Pol II) transcription in the promoter-proximal region of genes. The integrator complex provides a quality checkpoint during transcription elongation by driving premature transcription termination of transcripts that are unfavorably configured for transcriptional elongation: the complex terminates transcription by (1) catalyzing dephosphorylation of the C-terminal domain (CTD) of Pol II subunit Polr2A/Rbp1 and Spt5, and (2) degrading the exiting nascent RNA transcript via endonuclease activity. The integrator complex is also involved in the 3'-end processing of the U7 snRNA, and also the spliceosomal snRNAs U1, U2, U4 and U5. The chain is Protein asunder (asun) from Drosophila mojavensis (Fruit fly).